Reading from the N-terminus, the 373-residue chain is Queuine tRNA-ribosyltransferase (373 aa).

Asp-89 acts as the Proton acceptor in catalysis. Residues Asp-89–Phe-93, Asp-143, Gln-187, and Gly-214 each bind substrate. Residues Gly-245–Asp-251 are RNA binding. The active-site Nucleophile is the Asp-264. Positions Thr-269–Arg-273 are RNA binding; important for wobble base 34 recognition. Zn(2+) contacts are provided by Cys-302, Cys-304, Cys-307, and His-333.

Belongs to the queuine tRNA-ribosyltransferase family. As to quaternary structure, homodimer. Within each dimer, one monomer is responsible for RNA recognition and catalysis, while the other monomer binds to the replacement base PreQ1. Requires Zn(2+) as cofactor.

It carries out the reaction 7-aminomethyl-7-carbaguanine + guanosine(34) in tRNA = 7-aminomethyl-7-carbaguanosine(34) in tRNA + guanine. Its pathway is tRNA modification; tRNA-queuosine biosynthesis. Functionally, catalyzes the base-exchange of a guanine (G) residue with the queuine precursor 7-aminomethyl-7-deazaguanine (PreQ1) at position 34 (anticodon wobble position) in tRNAs with GU(N) anticodons (tRNA-Asp, -Asn, -His and -Tyr). Catalysis occurs through a double-displacement mechanism. The nucleophile active site attacks the C1' of nucleotide 34 to detach the guanine base from the RNA, forming a covalent enzyme-RNA intermediate. The proton acceptor active site deprotonates the incoming PreQ1, allowing a nucleophilic attack on the C1' of the ribose to form the product. After dissociation, two additional enzymatic reactions on the tRNA convert PreQ1 to queuine (Q), resulting in the hypermodified nucleoside queuosine (7-(((4,5-cis-dihydroxy-2-cyclopenten-1-yl)amino)methyl)-7-deazaguanosine). This chain is Queuine tRNA-ribosyltransferase, found in Tolumonas auensis (strain DSM 9187 / NBRC 110442 / TA 4).